The following is a 307-amino-acid chain: Aspartate carbamoyltransferase catalytic subunit (307 aa).

Arg58 and Thr59 together coordinate carbamoyl phosphate. Lys86 contacts L-aspartate. Carbamoyl phosphate is bound by residues Arg108, His136, and Gln139. L-aspartate contacts are provided by Arg169 and Arg223. Carbamoyl phosphate contacts are provided by Gly264 and Pro265.

This sequence belongs to the aspartate/ornithine carbamoyltransferase superfamily. ATCase family. As to quaternary structure, heterododecamer (2C3:3R2) of six catalytic PyrB chains organized as two trimers (C3), and six regulatory PyrI chains organized as three dimers (R2).

The catalysed reaction is carbamoyl phosphate + L-aspartate = N-carbamoyl-L-aspartate + phosphate + H(+). The protein operates within pyrimidine metabolism; UMP biosynthesis via de novo pathway; (S)-dihydroorotate from bicarbonate: step 2/3. Its function is as follows. Catalyzes the condensation of carbamoyl phosphate and aspartate to form carbamoyl aspartate and inorganic phosphate, the committed step in the de novo pyrimidine nucleotide biosynthesis pathway. This Syntrophus aciditrophicus (strain SB) protein is Aspartate carbamoyltransferase catalytic subunit.